Consider the following 243-residue polypeptide: uncharacterized protein (243 aa).

This sequence belongs to the methyltransferase superfamily.

This is an uncharacterized protein from Mycobacterium tuberculosis (strain CDC 1551 / Oshkosh).